Consider the following 568-residue polypeptide: Sulfite reductase [NADPH] hemoprotein beta-component (568 aa).

The [4Fe-4S] cluster site is built by C426, C432, C471, and C475. C475 contributes to the siroheme binding site.

The protein belongs to the nitrite and sulfite reductase 4Fe-4S domain family. Alpha(8)-beta(8). The alpha component is a flavoprotein, the beta component is a hemoprotein. Requires siroheme as cofactor. [4Fe-4S] cluster is required as a cofactor.

The catalysed reaction is hydrogen sulfide + 3 NADP(+) + 3 H2O = sulfite + 3 NADPH + 4 H(+). It functions in the pathway sulfur metabolism; hydrogen sulfide biosynthesis; hydrogen sulfide from sulfite (NADPH route): step 1/1. Its function is as follows. Component of the sulfite reductase complex that catalyzes the 6-electron reduction of sulfite to sulfide. This is one of several activities required for the biosynthesis of L-cysteine from sulfate. In Xylella fastidiosa (strain M23), this protein is Sulfite reductase [NADPH] hemoprotein beta-component.